The sequence spans 360 residues: tRNA-specific 2-thiouridylase MnmA (360 aa).

Residues Ala-9–Ser-16 and Leu-35 contribute to the ATP site. The active-site Nucleophile is Cys-104. Cysteines 104 and 197 form a disulfide. Gly-128 is an ATP binding site. Positions Lys-147–Gln-149 are interaction with tRNA. Catalysis depends on Cys-197, which acts as the Cysteine persulfide intermediate.

It belongs to the MnmA/TRMU family.

Its subcellular location is the cytoplasm. The catalysed reaction is S-sulfanyl-L-cysteinyl-[protein] + uridine(34) in tRNA + AH2 + ATP = 2-thiouridine(34) in tRNA + L-cysteinyl-[protein] + A + AMP + diphosphate + H(+). Functionally, catalyzes the 2-thiolation of uridine at the wobble position (U34) of tRNA, leading to the formation of s(2)U34. The protein is tRNA-specific 2-thiouridylase MnmA of Salinispora arenicola (strain CNS-205).